The sequence spans 390 residues: Lipid-A-disaccharide synthase (390 aa).

The protein belongs to the LpxB family.

It carries out the reaction a lipid X + a UDP-2-N,3-O-bis[(3R)-3-hydroxyacyl]-alpha-D-glucosamine = a lipid A disaccharide + UDP + H(+). Its pathway is bacterial outer membrane biogenesis; LPS lipid A biosynthesis. Its function is as follows. Condensation of UDP-2,3-diacylglucosamine and 2,3-diacylglucosamine-1-phosphate to form lipid A disaccharide, a precursor of lipid A, a phosphorylated glycolipid that anchors the lipopolysaccharide to the outer membrane of the cell. The chain is Lipid-A-disaccharide synthase from Haemophilus influenzae (strain 86-028NP).